The chain runs to 855 residues: Probable inactive ATP-dependent zinc metalloprotease FTSHI 4, chloroplastic (855 aa).

The N-terminal 78 residues, 1-78, are a transit peptide targeting the chloroplast; that stretch reads MTFYISSSLT…SFESTESSVS (78 aa). The helical transmembrane segment at 242–262 threads the bilayer; the sequence is VATFVVWSMRLALFVSLYVWI. 356-363 lines the ATP pocket; that stretch reads GPPGTGKT.

It belongs to the AAA ATPase family. As to quaternary structure, homooligomer. Interacts with FtsHi2. In terms of tissue distribution, ubiquitous but preferentially expressed in young leaves.

The protein localises to the plastid. The protein resides in the chloroplast thylakoid membrane. Functions in chloroplast biogenesis and chloroplast division. Required for plastid development during embryogenesis. Might be involved in chaperone functions or play a structural role in the thylakoid FtsH complex. This Arabidopsis thaliana (Mouse-ear cress) protein is Probable inactive ATP-dependent zinc metalloprotease FTSHI 4, chloroplastic.